The chain runs to 610 residues: UvrABC system protein C (610 aa).

The 79-residue stretch at 16-94 (SQPGVYRMYD…IKLYQPRYNV (79 aa)) folds into the GIY-YIG domain. One can recognise a UVR domain in the interval 204–239 (QQVLTQLITRMEEASQQLHFEDAARIRDQIQAVRRV).

It belongs to the UvrC family. As to quaternary structure, interacts with UvrB in an incision complex.

It localises to the cytoplasm. In terms of biological role, the UvrABC repair system catalyzes the recognition and processing of DNA lesions. UvrC both incises the 5' and 3' sides of the lesion. The N-terminal half is responsible for the 3' incision and the C-terminal half is responsible for the 5' incision. The chain is UvrABC system protein C from Yersinia pseudotuberculosis serotype I (strain IP32953).